A 251-amino-acid polypeptide reads, in one-letter code: Coproheme decarboxylase (251 aa).

Fe-coproporphyrin III contacts are provided by residues Arg133, 147–151, His174, Gln187, and Ser225; that span reads YPMSK. Tyr147 is a catalytic residue.

The protein belongs to the ChdC family. Type 1 subfamily. Fe-coproporphyrin III serves as cofactor.

The catalysed reaction is Fe-coproporphyrin III + 2 H2O2 + 2 H(+) = heme b + 2 CO2 + 4 H2O. The enzyme catalyses Fe-coproporphyrin III + H2O2 + H(+) = harderoheme III + CO2 + 2 H2O. It carries out the reaction harderoheme III + H2O2 + H(+) = heme b + CO2 + 2 H2O. Its pathway is porphyrin-containing compound metabolism; protoheme biosynthesis. In terms of biological role, involved in coproporphyrin-dependent heme b biosynthesis. Catalyzes the decarboxylation of Fe-coproporphyrin III (coproheme) to heme b (protoheme IX), the last step of the pathway. The reaction occurs in a stepwise manner with a three-propionate intermediate. In Listeria innocua serovar 6a (strain ATCC BAA-680 / CLIP 11262), this protein is Coproheme decarboxylase.